The chain runs to 428 residues: Enolase (428 aa).

(2R)-2-phosphoglycerate is bound at residue Gln163. Residue Glu205 is the Proton donor of the active site. Positions 242, 285, and 311 each coordinate Mg(2+). Residues Lys336, Arg365, Ser366, and Lys387 each coordinate (2R)-2-phosphoglycerate. The active-site Proton acceptor is Lys336.

This sequence belongs to the enolase family. It depends on Mg(2+) as a cofactor.

The protein resides in the cytoplasm. It localises to the secreted. It is found in the cell surface. The catalysed reaction is (2R)-2-phosphoglycerate = phosphoenolpyruvate + H2O. Its pathway is carbohydrate degradation; glycolysis; pyruvate from D-glyceraldehyde 3-phosphate: step 4/5. In terms of biological role, catalyzes the reversible conversion of 2-phosphoglycerate (2-PG) into phosphoenolpyruvate (PEP). It is essential for the degradation of carbohydrates via glycolysis. This is Enolase from Desulfatibacillum aliphaticivorans.